The following is a 125-amino-acid chain: MHSRENNRKFKISKEIQRKIALILQQKINDPRIGISTVSGVDLSSDFSHAKIFVTFLNKNTKQQIKSGLFILNKASFFIRKILNKTMRLRIIPKLTFIYDYSLIKGRNIDDLFNNNIVKISKKSI.

Belongs to the RbfA family. Monomer. Binds 30S ribosomal subunits, but not 50S ribosomal subunits or 70S ribosomes.

The protein resides in the cytoplasm. Functionally, one of several proteins that assist in the late maturation steps of the functional core of the 30S ribosomal subunit. Associates with free 30S ribosomal subunits (but not with 30S subunits that are part of 70S ribosomes or polysomes). Required for efficient processing of 16S rRNA. May interact with the 5'-terminal helix region of 16S rRNA. The protein is Ribosome-binding factor A of Wigglesworthia glossinidia brevipalpis.